The chain runs to 628 residues: Putative serine esterase Mb1866c (628 aa).

Residue S156 is the Acyl-ester intermediate of the active site. Catalysis depends on charge relay system residues D322 and H350.

This sequence belongs to the CocE/NonD hydrolase family.

This is Putative serine esterase Mb1866c from Mycobacterium bovis (strain ATCC BAA-935 / AF2122/97).